A 355-amino-acid chain; its full sequence is Uroporphyrinogen decarboxylase (355 aa).

Substrate contacts are provided by residues 27–31 (RQAGR), D78, Y155, S210, and H328.

It belongs to the uroporphyrinogen decarboxylase family. As to quaternary structure, homodimer.

Its subcellular location is the cytoplasm. The enzyme catalyses uroporphyrinogen III + 4 H(+) = coproporphyrinogen III + 4 CO2. It participates in porphyrin-containing compound metabolism; protoporphyrin-IX biosynthesis; coproporphyrinogen-III from 5-aminolevulinate: step 4/4. Functionally, catalyzes the decarboxylation of four acetate groups of uroporphyrinogen-III to yield coproporphyrinogen-III. The chain is Uroporphyrinogen decarboxylase from Ectopseudomonas mendocina (strain ymp) (Pseudomonas mendocina).